A 438-amino-acid chain; its full sequence is V-type ATP synthase beta chain (438 aa).

Belongs to the ATPase alpha/beta chains family.

Functionally, produces ATP from ADP in the presence of a proton gradient across the membrane. The V-type beta chain is a regulatory subunit. This chain is V-type ATP synthase beta chain, found in Chlamydia trachomatis serovar A (strain ATCC VR-571B / DSM 19440 / HAR-13).